The primary structure comprises 53 residues: UPF0181 protein VC_A0569 (53 aa).

Belongs to the UPF0181 family.

The polypeptide is UPF0181 protein VC_A0569 (Vibrio cholerae serotype O1 (strain ATCC 39315 / El Tor Inaba N16961)).